A 434-amino-acid polypeptide reads, in one-letter code: MDKIWHMGPRGDYTRKKRAGERLNLTPKPDLALPGRTEALPGLKGKGKEQGLRKITEKKELSRLTGSSSQRPSLLSVTGGEHLQENSPGQETPEEKTPPCETVTDTFEMDSLLSSTELVSGPAEQDDFSSCLPSCSNAELHTESTDERGSSFPSPELFRGSDCLDWEHPKLEDYMFYKNSTLLDTSKAVVIEKAPQFANLSAVLSSSSKNYEKRHRKIGMTLAAQHLSPEPKYASNLASVVDNAASEVVFAEKTGPPTTEKTQKKPENESEDSGPLVQTKLSSGHPDNKALCSPLSSALESTAVRYTLLPQPLEPVLKKGCILPDKQSKALLTSTPSSDIAEFVIDLSPVQNVSFEELFPNVSNYVNSSEVVPVSSLQESSSNEFSPNTSEICCIIRSSPGTRQMRRKDPAVKNRCSPPKDVPLDIIMKTNGRT.

Disordered stretches follow at residues 1–102 (MDKI…PCET) and 249–289 (VFAE…PDNK). A compositionally biased stretch (basic and acidic residues) spans 46–62 (KGKEQGLRKITEKKELS). A compositionally biased stretch (polar residues) spans 64–76 (LTGSSSQRPSLLS). A POLO box domain (PBD)-binding motif is present at residues 334–336 (STP). The tract at residues 391–394 (EICC) is required for localization to kinetochores. Residues 404–424 (QMRRKDPAVKNRCSPPKDVPL) are disordered.

In terms of assembly, interacts with CENPC. Interacts with PLK1; required for recruitment of PLK1 at kinetochores. In terms of tissue distribution, germ cell-specific. Expressed in both testis and ovary. Not expressed in other tissues.

It localises to the chromosome. It is found in the centromere. The protein localises to the kinetochore. In terms of biological role, key regulator of kinetochore function during meiosis I: required both for mono-orientation of kinetochores on sister chromosomes and protection of centromeric cohesin from separase-mediated cleavage. Acts by facilitating kinetochore mono-orientation during meiosis I, when kinetochores on sister chromosomes face the same direction and are thus captured and pulled by spindle fibers from the same pole. Also required to prevent cleavage of cohesin at centromeres during meiosis I, possibly by acting as a regulator of the shugoshin-dependent protection pathway. Acts in collaboration with PLK1: required for PLK1 enrichment to kinetochores. Not required during meiosis II or mitosis. The polypeptide is Meiosis-specific kinetochore protein (Mus musculus (Mouse)).